Here is a 218-residue protein sequence, read N- to C-terminus: uncharacterized protein (218 aa).

Disordered regions lie at residues 30-71 (FSHR…RSPP), 93-120 (SGRG…PRPD), and 133-209 (MEVE…PGFP). The span at 43–71 (PGAPAVVPAPVSAPRPASSPARSESRSPP) shows a compositional bias: low complexity. The segment covering 94–110 (GRGGGGGGGGGARTGGG) has biased composition (gly residues). Residues 138–148 (PPHPPPQPQVC) show a composition bias toward pro residues. Over residues 156–171 (PGHGRAGLPEGKGPGG) the composition is skewed to gly residues. Residues 191-209 (RAPSPAAPRRGRLPAPGFP) show a composition bias toward low complexity.

This is an uncharacterized protein from Homo sapiens (Human).